The chain runs to 361 residues: Probable G-protein coupled receptor 25 (361 aa).

The Extracellular segment spans residues 1–39 (MAPTEPWSPSPGSAPWDYSGLDGLEELELCPAGDLPYGY). The helical transmembrane segment at 40–60 (VYIPALYLAAFAVGLLGNAFV) threads the bilayer. Topologically, residues 61 to 75 (VWLLAGRRGPRRLVD) are cytoplasmic. A helical transmembrane segment spans residues 76–96 (TFVLHLAAADLGFVLTLPLWA). Topologically, residues 97–126 (AAAALGGRWPFGDGLCKLSSFALAGTRCAG) are extracellular. A helical membrane pass occupies residues 127–147 (ALLLAGMSVDRYLAVVKLLEA). The Cytoplasmic portion of the chain corresponds to 148–155 (RPLRTPRC). A helical transmembrane segment spans residues 156–176 (ALASCCGVWAVALLAGLPSLV). Residues 177 to 200 (YRGLQPLPGGQDSQCGEEPSHAFQ) lie on the Extracellular side of the membrane. The chain crosses the membrane as a helical span at residues 201–220 (GLSLLLLLLTFVLPLVVTLF). At 221–242 (CYCRISRRLRRPPHVGRARRNS) the chain is on the cytoplasmic side. The chain crosses the membrane as a helical span at residues 243-263 (LRIIFAIESTFVGSWLPFSAL). Topologically, residues 264–289 (RAVFHLARLGALPLPCPLLLALRWGL) are extracellular. The helical transmembrane segment at 290–310 (TIATCLAFVNSCANPLIYLLL) threads the bilayer. The Cytoplasmic segment spans residues 311–361 (DRSFRARALDGACGRTGRLARRISSASSLSRDDSSVFRCRAQAANTASASW).

The protein belongs to the G-protein coupled receptor 1 family.

The protein resides in the cell membrane. In terms of biological role, orphan receptor. The sequence is that of Probable G-protein coupled receptor 25 (GPR25) from Homo sapiens (Human).